The chain runs to 800 residues: MSEIIQDLSLEDVLGDRFGRYSKYIIQERALPDVRDGLKPVQRRILYAMYSSGNTHDKNFRKSAKTVGDVIGQYHPHGDFSVYKAMVRLSQDWKLRHVLIEMHGNNGSIDNDPPAAMRYTEAKLSLLAEELLRDINKETVSFIPNYDDTTLEPMVLPSRFPNLLVNGSTGISAGYATDIPPHNLAEVIQATLKYIDNPDITVNQLMKYIKGPDFPTGGIIQGIDGIKKAYESGKGRIIVRSKVEEETLRNGRKQLIITEIPYEVNKSSLVKRIDELRADKKVDGIVEVRDETDRTGLRIAIELKKDVNSESIKNYLYKNSDLQISYNFNMVAISDGRPKLMGIRQIIDSYLNHQIEVVANRTKFELDNAEKRMHIVEGLIKALSILDKVIELIRSSKNKRDAKENLIEVFEFTEEQAEAIVMLQLYRLTNTDIVALEGEHKELEALIKQLRHILDNHDALLNVIKEELNEIKKKFKSERLSLIEAEIEEIKIDKEVMVPSEEVILSMTRHGYIKRTSIRSFNASGVEDIGLKDGDSLLKHQEVNTQDTVLVFTNKGRYLFIPVHKLADIRWKELGQHVSQIVPIEEDEVVINVFNEKDFNTDAFYVFATQNGMIKKSTVPLFKTTRFNKPLIATKVKENDDLISVMRFEKDQLITVITNKGMSLTYNTSELSDTGLRAAGVKSINLKAEDFVVMTEGVSENDTILMATQRGSLKRISFKILQVAKRAQRGITLLKELKKNPHRIVAAHVVTGEHSQYTLYSKSNEEHGLINDIHKSEQYTNGSFIVDTDDFGEVIDMYIS.

Residues 31–495 (LPDVRDGLKP…EIEEIKIDKE (465 aa)) enclose the Topo IIA-type catalytic domain. The active-site O-(5'-phospho-DNA)-tyrosine intermediate is the Tyr-119.

The protein belongs to the type II topoisomerase GyrA/ParC subunit family. ParC type 2 subfamily. As to quaternary structure, heterotetramer composed of ParC and ParE.

Its subcellular location is the cell membrane. It carries out the reaction ATP-dependent breakage, passage and rejoining of double-stranded DNA.. Topoisomerase IV is essential for chromosome segregation. It relaxes supercoiled DNA. Performs the decatenation events required during the replication of a circular DNA molecule. This Staphylococcus aureus protein is DNA topoisomerase 4 subunit A.